The chain runs to 110 residues: Nucleoid-associated protein Tola_2216 (110 aa).

The protein belongs to the YbaB/EbfC family. As to quaternary structure, homodimer.

It localises to the cytoplasm. It is found in the nucleoid. In terms of biological role, binds to DNA and alters its conformation. May be involved in regulation of gene expression, nucleoid organization and DNA protection. This is Nucleoid-associated protein Tola_2216 from Tolumonas auensis (strain DSM 9187 / NBRC 110442 / TA 4).